The primary structure comprises 305 residues: Phosphatidylglycerol--prolipoprotein diacylglyceryl transferase (305 aa).

3 helical membrane passes run F10–I30, L59–W79, and L92–I112. R140 contributes to the a 1,2-diacyl-sn-glycero-3-phospho-(1'-sn-glycerol) binding site. Transmembrane regions (helical) follow at residues L182 to L202 and I260 to L280.

It belongs to the Lgt family.

The protein resides in the cell membrane. The enzyme catalyses L-cysteinyl-[prolipoprotein] + a 1,2-diacyl-sn-glycero-3-phospho-(1'-sn-glycerol) = an S-1,2-diacyl-sn-glyceryl-L-cysteinyl-[prolipoprotein] + sn-glycerol 1-phosphate + H(+). Its pathway is protein modification; lipoprotein biosynthesis (diacylglyceryl transfer). In terms of biological role, catalyzes the transfer of the diacylglyceryl group from phosphatidylglycerol to the sulfhydryl group of the N-terminal cysteine of a prolipoprotein, the first step in the formation of mature lipoproteins. The polypeptide is Phosphatidylglycerol--prolipoprotein diacylglyceryl transferase (Chloroflexus aggregans (strain MD-66 / DSM 9485)).